Here is a 242-residue protein sequence, read N- to C-terminus: Methylthioribulose-1-phosphate dehydratase (242 aa).

Residues M1 to L22 are disordered. Residue C97 participates in substrate binding. The Zn(2+) site is built by H115 and H117. The Proton donor/acceptor role is filled by E139. Residue H195 participates in Zn(2+) binding.

Belongs to the aldolase class II family. MtnB subfamily. It depends on Zn(2+) as a cofactor.

The protein localises to the cytoplasm. The enzyme catalyses 5-(methylsulfanyl)-D-ribulose 1-phosphate = 5-methylsulfanyl-2,3-dioxopentyl phosphate + H2O. Its pathway is amino-acid biosynthesis; L-methionine biosynthesis via salvage pathway; L-methionine from S-methyl-5-thio-alpha-D-ribose 1-phosphate: step 2/6. Its function is as follows. Catalyzes the dehydration of methylthioribulose-1-phosphate (MTRu-1-P) into 2,3-diketo-5-methylthiopentyl-1-phosphate (DK-MTP-1-P). Functions in the methionine salvage pathway. May play a role in apoptosis. This chain is Methylthioribulose-1-phosphate dehydratase, found in Gallus gallus (Chicken).